An 829-amino-acid polypeptide reads, in one-letter code: Translation initiation factor IF-2 (829 aa).

Positions 128–137 (QNAEEEKVEA) are enriched in basic and acidic residues. The segment at 128 to 157 (QNAEEEKVEASAKTVQNNEDIQPQTSKKKE) is disordered. Residues 140–152 (KTVQNNEDIQPQT) show a composition bias toward polar residues. In terms of domain architecture, tr-type G spans 327 to 497 (TRAPVVTVMG…LLIAEMQDLK (171 aa)). Residues 336–343 (GHVDHGKT) are G1. 336 to 343 (GHVDHGKT) serves as a coordination point for GTP. Positions 361 to 365 (GITQH) are G2. The G3 stretch occupies residues 383–386 (DTPG). GTP is bound by residues 383–387 (DTPGH) and 437–440 (NKID). The segment at 437–440 (NKID) is G4. Residues 473–475 (SAL) are G5.

It belongs to the TRAFAC class translation factor GTPase superfamily. Classic translation factor GTPase family. IF-2 subfamily.

It localises to the cytoplasm. Its function is as follows. One of the essential components for the initiation of protein synthesis. Protects formylmethionyl-tRNA from spontaneous hydrolysis and promotes its binding to the 30S ribosomal subunits. Also involved in the hydrolysis of GTP during the formation of the 70S ribosomal complex. The polypeptide is Translation initiation factor IF-2 (Rickettsia felis (strain ATCC VR-1525 / URRWXCal2) (Rickettsia azadi)).